Here is a 412-residue protein sequence, read N- to C-terminus: Transforming growth factor beta-2 proprotein (412 aa).

The signal sequence occupies residues 1–20 (MHCYLLSVFLTLDLAAVALS). N72, N139, and N240 each carry an N-linked (GlcNAc...) asparagine glycan. 4 disulfides stabilise this stretch: C307/C316, C315/C378, C344/C409, and C348/C411.

Belongs to the TGF-beta family. As to quaternary structure, interacts with Transforming growth factor beta-2 (TGF-beta-2) chain; interaction is non-covalent and maintains (TGF-beta-2) in a latent state. Homodimer; disulfide-linked. Interacts with TGF-beta receptors (TGFBR1 and TGFBR2), leading to signal transduction. In terms of processing, the precursor proprotein is cleaved in the Golgi apparatus to form Transforming growth factor beta-2 (TGF-beta-2) and Latency-associated peptide (LAP) chains, which remain non-covalently linked, rendering TGF-beta-2 inactive.

The protein localises to the secreted. It is found in the extracellular space. The protein resides in the extracellular matrix. Functionally, precursor of the Latency-associated peptide (LAP) and Transforming growth factor beta-2 (TGF-beta-2) chains, which constitute the regulatory and active subunit of TGF-beta-2, respectively. In terms of biological role, required to maintain the Transforming growth factor beta-2 (TGF-beta-2) chain in a latent state during storage in extracellular matrix. Associates non-covalently with TGF-beta-2 and regulates its activation via interaction with 'milieu molecules', such as LTBP1 and LRRC32/GARP, that control activation of TGF-beta-2. Its function is as follows. Multifunctional protein that regulates various processes such as angiogenesis and heart development. Activation into mature form follows different steps: following cleavage of the proprotein in the Golgi apparatus, Latency-associated peptide (LAP) and Transforming growth factor beta-2 (TGF-beta-2) chains remain non-covalently linked rendering TGF-beta-2 inactive during storage in extracellular matrix. At the same time, LAP chain interacts with 'milieu molecules', such as LTBP1 and LRRC32/GARP, that control activation of TGF-beta-2 and maintain it in a latent state during storage in extracellular milieus. Once activated following release of LAP, TGF-beta-2 acts by binding to TGF-beta receptors (TGFBR1 and TGFBR2), which transduce signal. The polypeptide is Transforming growth factor beta-2 proprotein (TGFB2) (Gallus gallus (Chicken)).